Reading from the N-terminus, the 947-residue chain is Probable outer membrane protein pmp19 (947 aa).

An N-terminal signal peptide occupies residues 1–19 (MKQMRLWGFLFLSSFCQVS). The region spanning 672 to 947 (IPLQHLCVFG…NAHAGLSLSF (276 aa)) is the Autotransporter domain.

This sequence belongs to the PMP outer membrane protein family.

The protein resides in the secreted. The protein localises to the cell wall. Its subcellular location is the cell outer membrane. The chain is Probable outer membrane protein pmp19 (pmp19) from Chlamydia pneumoniae (Chlamydophila pneumoniae).